The sequence spans 269 residues: CCAAT/enhancer-binding protein delta (269 aa).

Disordered regions lie at residues 1–48 (MSAA…PGAA), 97–133 (PLEL…APGS), and 151–219 (AAGQ…NQEM). Ser-2 bears the N-acetylserine mark. 2 stretches are compositionally biased toward low complexity: residues 36–48 (GAEP…PGAA) and 97–107 (PLELLPGGPAR). Lys-120 is covalently cross-linked (Glycyl lysine isopeptide (Lys-Gly) (interchain with G-Cter in SUMO)). A compositionally biased stretch (pro residues) spans 155-175 (PTPPTSPEPPRSSPRQTPAPG). Basic and acidic residues predominate over residues 177 to 201 (AREKSAGKRGPDRGSPEYRQRRERN). A bZIP domain is found at 191–254 (SPEYRQRRER…AGLRQFFKQL (64 aa)). A basic motif region spans residues 195 to 222 (RQRRERNNIAVRKSRDKAKRRNQEMQQK). A leucine-zipper region spans residues 226–254 (LSAENEKLHQRVEQLTRDLAGLRQFFKQL).

This sequence belongs to the bZIP family. C/EBP subfamily. In terms of assembly, binds DNA as a homodimer and as a heterodimer. Can form stable heterodimers with CEBPB. Can form stable heterodimers with CEBPA and CEBPE. Directly interacts with SPI1/PU.1; this interaction does not affect DNA-binding properties of each partner. Interacts with PRDM16.

The protein resides in the nucleus. Its function is as follows. Transcription activator that recognizes two different DNA motifs: the CCAAT homology common to many promoters and the enhanced core homology common to many enhancers. Important transcription factor regulating the expression of genes involved in immune and inflammatory responses. Transcriptional activator that enhances IL6 transcription alone and as heterodimer with CEBPB. The protein is CCAAT/enhancer-binding protein delta (CEBPD) of Homo sapiens (Human).